The following is a 460-amino-acid chain: DEAD-box helicase Dbp80 (460 aa).

A Phosphoserine modification is found at serine 26. Phosphothreonine is present on threonine 30. The Q motif signature appears at 73 to 101; it reads KTFEALHLKASLLKGIYAMGFNTPSKIQE. The Helicase ATP-binding domain occupies 106-276; sequence TLLADPPQNM…RLIVADPTII (171 aa). 119–126 serves as a coordination point for ATP; that stretch reads SQSGTGKT. The short motif at 223–226 is the DEAD box element; sequence DEAD. The 169-residue stretch at 287–455 folds into the Helicase C-terminal domain; the sequence is NIKQYYVKCK…VLNTDSADDI (169 aa).

This sequence belongs to the DEAD box helicase family. DDX19/DBP5 subfamily.

The protein resides in the cytoplasm. It is found in the nucleus. It localises to the nucleoplasm. It catalyses the reaction ATP + H2O = ADP + phosphate + H(+). In terms of biological role, ATP-dependent RNA helicase involved in mRNA export from the nucleus. The chain is DEAD-box helicase Dbp80 (Dbp80) from Drosophila melanogaster (Fruit fly).